Here is a 272-residue protein sequence, read N- to C-terminus: Ribosomal RNA small subunit methyltransferase A (272 aa).

6 residues coordinate S-adenosyl-L-methionine: Asn-27, Leu-29, Gly-54, Glu-75, Asp-97, and Asn-117.

The protein belongs to the class I-like SAM-binding methyltransferase superfamily. rRNA adenine N(6)-methyltransferase family. RsmA subfamily.

Its subcellular location is the cytoplasm. It catalyses the reaction adenosine(1518)/adenosine(1519) in 16S rRNA + 4 S-adenosyl-L-methionine = N(6)-dimethyladenosine(1518)/N(6)-dimethyladenosine(1519) in 16S rRNA + 4 S-adenosyl-L-homocysteine + 4 H(+). Functionally, specifically dimethylates two adjacent adenosines (A1518 and A1519) in the loop of a conserved hairpin near the 3'-end of 16S rRNA in the 30S particle. May play a critical role in biogenesis of 30S subunits. The sequence is that of Ribosomal RNA small subunit methyltransferase A from Malacoplasma penetrans (strain HF-2) (Mycoplasma penetrans).